Reading from the N-terminus, the 657-residue chain is Pentatricopeptide repeat-containing protein At1g11710, mitochondrial (657 aa).

A mitochondrion-targeting transit peptide spans 1–74 (MFGHVFSRRT…REFRSSPKLA (74 aa)). PPR repeat units follow at residues 147–181 (SPDV…GFCV), 182–216 (SVHA…GYVE), 217–251 (NVNT…GVWP), 252–282 (NVVS…MGMM), 290–324 (NAVT…GVDC), 325–359 (NERT…GLVV), 360–394 (NTVI…NMQI), 395–429 (DRFT…KLVE), 430–464 (DIVC…GLSL), 465–499 (DAIS…NKTS), 500–530 (NLVI…MEIK), 531–565 (DIVT…DGEK), 568–602 (SLVT…GVVP), and 603–637 (DSIT…GVTP).

The protein belongs to the PPR family. P subfamily.

The protein resides in the mitochondrion. This is Pentatricopeptide repeat-containing protein At1g11710, mitochondrial from Arabidopsis thaliana (Mouse-ear cress).